The following is a 101-amino-acid chain: Small ribosomal subunit protein uS14 (101 aa).

The segment at 1–26 (MAKVSSIKKNESRKKKSQSLHNKRSA) is disordered. The span at 11-26 (ESRKKKSQSLHNKRSA) shows a compositional bias: basic residues.

It belongs to the universal ribosomal protein uS14 family. Part of the 30S ribosomal subunit. Contacts proteins S3 and S10.

Its function is as follows. Binds 16S rRNA, required for the assembly of 30S particles and may also be responsible for determining the conformation of the 16S rRNA at the A site. This is Small ribosomal subunit protein uS14 from Rickettsia felis (strain ATCC VR-1525 / URRWXCal2) (Rickettsia azadi).